A 44-amino-acid chain; its full sequence is Unknown protein 1 (44 aa).

In Lonomia obliqua (Moth), this protein is Unknown protein 1.